The following is a 129-amino-acid chain: Small ribosomal subunit protein uS11 (129 aa).

Belongs to the universal ribosomal protein uS11 family. Part of the 30S ribosomal subunit.

Functionally, located on the platform of the 30S subunit. In Haloarcula marismortui (strain ATCC 43049 / DSM 3752 / JCM 8966 / VKM B-1809) (Halobacterium marismortui), this protein is Small ribosomal subunit protein uS11.